Consider the following 327-residue polypeptide: Lipoyl synthase (327 aa).

Residues Cys72, Cys77, Cys83, Cys98, Cys102, Cys105, and Ser313 each coordinate [4Fe-4S] cluster. In terms of domain architecture, Radical SAM core spans 83–302 (CWSHGTATIM…RKVGLEKGFL (220 aa)).

The protein belongs to the radical SAM superfamily. Lipoyl synthase family. The cofactor is [4Fe-4S] cluster.

The protein resides in the cytoplasm. The catalysed reaction is [[Fe-S] cluster scaffold protein carrying a second [4Fe-4S](2+) cluster] + N(6)-octanoyl-L-lysyl-[protein] + 2 oxidized [2Fe-2S]-[ferredoxin] + 2 S-adenosyl-L-methionine + 4 H(+) = [[Fe-S] cluster scaffold protein] + N(6)-[(R)-dihydrolipoyl]-L-lysyl-[protein] + 4 Fe(3+) + 2 hydrogen sulfide + 2 5'-deoxyadenosine + 2 L-methionine + 2 reduced [2Fe-2S]-[ferredoxin]. The protein operates within protein modification; protein lipoylation via endogenous pathway; protein N(6)-(lipoyl)lysine from octanoyl-[acyl-carrier-protein]: step 2/2. In terms of biological role, catalyzes the radical-mediated insertion of two sulfur atoms into the C-6 and C-8 positions of the octanoyl moiety bound to the lipoyl domains of lipoate-dependent enzymes, thereby converting the octanoylated domains into lipoylated derivatives. The chain is Lipoyl synthase from Francisella tularensis subsp. holarctica (strain FTNF002-00 / FTA).